The following is a 486-amino-acid chain: Transmembrane protein 39A (486 aa).

An N-linked (GlcNAc...) asparagine glycan is attached at Asn-31. 8 consecutive transmembrane segments (helical) span residues 72–92 (SLFFEFLFFIYLLIVLFIQYI), 110–130 (TSLNFHLIDYYLAAFITVMLA), 155–175 (LILARLVLLTLCGWVLCWTLV), 182–202 (SVLNLLFLGYPFGVYVPLYCF), 285–305 (EVLFNSLFSAYYVAFLPLCFV), 317–337 (CEHLIMVWINAFVMLTTQLLP), 418–438 (VLNLLILIEGSVVFYQLYSLL), and 444–464 (NHTLSMALILFCNYYVLFKLL).

Belongs to the TMEM39 family. As to quaternary structure, interacts with SACM1L, SEC23A and SEC24A.

The protein localises to the endoplasmic reticulum membrane. Functionally, regulates autophagy by controlling the spatial distribution and levels of the intracellular phosphatidylinositol 4-phosphate (PtdIns(4)P) pools. Modulates (PtdIns(4)P) levels by regulating the ER-to-Golgi trafficking of the phosphatidylinositide phosphatase SACM1L. This Mus musculus (Mouse) protein is Transmembrane protein 39A (Tmem39a).